We begin with the raw amino-acid sequence, 99 residues long: 10 kDa heat shock protein, mitochondrial (99 aa).

The protein belongs to the GroES chaperonin family. Homoheptamer arranged in a ring structure. 2 heptameric Hsp10 rings interact with a Hsp60 tetradecamer in the structure of a back-to-back double heptameric ring to form the symmetrical football complex.

Its subcellular location is the mitochondrion matrix. In terms of biological role, co-chaperonin implicated in mitochondrial protein import and macromolecular assembly. Together with Hsp60, facilitates the correct folding of imported proteins. May also prevent misfolding and promote the refolding and proper assembly of unfolded polypeptides generated under stress conditions in the mitochondrial matrix. The functional units of these chaperonins consist of heptameric rings of the large subunit Hsp60, which function as a back-to-back double ring. In a cyclic reaction, Hsp60 ring complexes bind one unfolded substrate protein per ring, followed by the binding of ATP and association with 2 heptameric rings of the co-chaperonin Hsp10. This leads to sequestration of the substrate protein in the inner cavity of Hsp60 where, for a certain period of time, it can fold undisturbed by other cell components. Synchronous hydrolysis of ATP in all Hsp60 subunits results in the dissociation of the chaperonin rings and the release of ADP and the folded substrate protein. The polypeptide is 10 kDa heat shock protein, mitochondrial (hspe1) (Oryzias latipes (Japanese rice fish)).